A 230-amino-acid chain; its full sequence is Ribosome biogenesis protein SLX9 homolog (230 aa).

The span at Met1–Val11 shows a compositional bias: basic residues. 2 disordered regions span residues Met1–Gly42 and Leu155–Gln187. Pro residues predominate over residues Gly25–Ala38. A Phosphothreonine modification is found at Thr34. Residues Arg166–Glu177 are compositionally biased toward basic and acidic residues. The residue at position 203 (Ser203) is a Phosphoserine.

This sequence belongs to the SLX9 family. In terms of tissue distribution, not detected in any tested tissue.

It is found in the nucleus. It localises to the nucleolus. May be involved in ribosome biogenesis. The sequence is that of Ribosome biogenesis protein SLX9 homolog from Homo sapiens (Human).